The primary structure comprises 518 residues: Probable cytochrome P450 317a1 (518 aa).

Residue C461 participates in heme binding.

This sequence belongs to the cytochrome P450 family. Heme serves as cofactor.

It is found in the endoplasmic reticulum membrane. The protein localises to the microsome membrane. Its function is as follows. May be involved in the metabolism of insect hormones and in the breakdown of synthetic insecticides. The sequence is that of Probable cytochrome P450 317a1 (Cyp317a1) from Drosophila melanogaster (Fruit fly).